The primary structure comprises 642 residues: 1,4-alpha-glucan branching enzyme GlgB (642 aa).

Residue D304 is the Nucleophile of the active site. The active-site Proton donor is E355.

This sequence belongs to the glycosyl hydrolase 13 family. GlgB subfamily. Monomer.

The catalysed reaction is Transfers a segment of a (1-&gt;4)-alpha-D-glucan chain to a primary hydroxy group in a similar glucan chain.. It participates in glycan biosynthesis; glycogen biosynthesis. Its function is as follows. Catalyzes the formation of the alpha-1,6-glucosidic linkages in glycogen by scission of a 1,4-alpha-linked oligosaccharide from growing alpha-1,4-glucan chains and the subsequent attachment of the oligosaccharide to the alpha-1,6 position. The protein is 1,4-alpha-glucan branching enzyme GlgB of Streptococcus pneumoniae serotype 2 (strain D39 / NCTC 7466).